The primary structure comprises 52 residues: Conotoxin Cal9.2b (52 aa).

A propeptide spanning residues 1–6 (KKGVTL) is cleaved from the precursor. 3 disulfide bridges follow: Cys14-Cys31, Cys19-Cys41, and Cys21-Cys46.

As to expression, expressed by the venom duct.

The protein resides in the secreted. In terms of biological role, probable neurotoxin with unknown target. Possibly targets ion channels. This is Conotoxin Cal9.2b from Californiconus californicus (California cone).